Here is a 347-residue protein sequence, read N- to C-terminus: CRISPR-associated endonuclease Cas1 4 (347 aa).

Over residues 1 to 21 (MNIENEVHIENASESKREPKP) the composition is skewed to basic and acidic residues. Residues 1–25 (MNIENEVHIENASESKREPKPPEGL) are disordered. Glutamate 176, histidine 241, and glutamate 256 together coordinate Mn(2+).

This sequence belongs to the CRISPR-associated endonuclease Cas1 family. In terms of assembly, homodimer, forms a heterotetramer with a Cas2 homodimer. Requires Mg(2+) as cofactor. Mn(2+) serves as cofactor.

In terms of biological role, CRISPR (clustered regularly interspaced short palindromic repeat), is an adaptive immune system that provides protection against mobile genetic elements (viruses, transposable elements and conjugative plasmids). CRISPR clusters contain spacers, sequences complementary to antecedent mobile elements, and target invading nucleic acids. CRISPR clusters are transcribed and processed into CRISPR RNA (crRNA). Acts as a dsDNA endonuclease. Involved in the integration of spacer DNA into the CRISPR cassette. The chain is CRISPR-associated endonuclease Cas1 4 from Methanospirillum hungatei JF-1 (strain ATCC 27890 / DSM 864 / NBRC 100397 / JF-1).